We begin with the raw amino-acid sequence, 286 residues long: Lipoyl synthase (286 aa).

Positions 34, 39, 45, 60, 64, 67, and 271 each coordinate [4Fe-4S] cluster. The region spanning 46–260 (WESGTATFMI…EESAYSIGFS (215 aa)) is the Radical SAM core domain.

It belongs to the radical SAM superfamily. Lipoyl synthase family. It depends on [4Fe-4S] cluster as a cofactor.

The protein resides in the cytoplasm. The enzyme catalyses [[Fe-S] cluster scaffold protein carrying a second [4Fe-4S](2+) cluster] + N(6)-octanoyl-L-lysyl-[protein] + 2 oxidized [2Fe-2S]-[ferredoxin] + 2 S-adenosyl-L-methionine + 4 H(+) = [[Fe-S] cluster scaffold protein] + N(6)-[(R)-dihydrolipoyl]-L-lysyl-[protein] + 4 Fe(3+) + 2 hydrogen sulfide + 2 5'-deoxyadenosine + 2 L-methionine + 2 reduced [2Fe-2S]-[ferredoxin]. The protein operates within protein modification; protein lipoylation via endogenous pathway; protein N(6)-(lipoyl)lysine from octanoyl-[acyl-carrier-protein]: step 2/2. Functionally, catalyzes the radical-mediated insertion of two sulfur atoms into the C-6 and C-8 positions of the octanoyl moiety bound to the lipoyl domains of lipoate-dependent enzymes, thereby converting the octanoylated domains into lipoylated derivatives. The sequence is that of Lipoyl synthase from Picrophilus torridus (strain ATCC 700027 / DSM 9790 / JCM 10055 / NBRC 100828 / KAW 2/3).